The chain runs to 257 residues: 7-carboxy-7-deazaguanine synthase (257 aa).

The disordered stretch occupies residues 1-25 (MKSVDHPVDVLPAEHSAETPGDARA). Substrate is bound by residues 39-41 (RQG) and arginine 54. Residues 45-244 (LTGTESVFIR…AISRGYQYCD (200 aa)) enclose the Radical SAM core domain. 3 residues coordinate [4Fe-4S] cluster: cysteine 58, cysteine 62, and cysteine 65. Mg(2+) is bound at residue threonine 67. Residue threonine 99 coordinates substrate. S-adenosyl-L-methionine is bound by residues glycine 101 and 143–145 (SPK).

It belongs to the radical SAM superfamily. 7-carboxy-7-deazaguanine synthase family. As to quaternary structure, homodimer. Requires [4Fe-4S] cluster as cofactor. The cofactor is S-adenosyl-L-methionine. Mg(2+) serves as cofactor.

The enzyme catalyses 6-carboxy-5,6,7,8-tetrahydropterin + H(+) = 7-carboxy-7-deazaguanine + NH4(+). Its pathway is purine metabolism; 7-cyano-7-deazaguanine biosynthesis. Catalyzes the complex heterocyclic radical-mediated conversion of 6-carboxy-5,6,7,8-tetrahydropterin (CPH4) to 7-carboxy-7-deazaguanine (CDG), a step common to the biosynthetic pathways of all 7-deazapurine-containing compounds. The chain is 7-carboxy-7-deazaguanine synthase from Rhodopirellula baltica (strain DSM 10527 / NCIMB 13988 / SH1).